The chain runs to 496 residues: Apolipoprotein N-acyltransferase (496 aa).

6 consecutive transmembrane segments (helical) span residues Gly-23–Trp-43, Leu-50–Leu-70, Leu-84–Leu-104, Leu-126–Gln-146, Trp-171–Ile-191, and Phe-205–Ile-225. In terms of domain architecture, CN hydrolase spans Trp-236–Ile-464. Glu-276 acts as the Proton acceptor in catalysis. Lys-325 is an active-site residue. Cys-374 serves as the catalytic Nucleophile. A helical membrane pass occupies residues Pro-476–Asn-496.

This sequence belongs to the CN hydrolase family. Apolipoprotein N-acyltransferase subfamily.

It is found in the cell inner membrane. It catalyses the reaction N-terminal S-1,2-diacyl-sn-glyceryl-L-cysteinyl-[lipoprotein] + a glycerophospholipid = N-acyl-S-1,2-diacyl-sn-glyceryl-L-cysteinyl-[lipoprotein] + a 2-acyl-sn-glycero-3-phospholipid + H(+). The protein operates within protein modification; lipoprotein biosynthesis (N-acyl transfer). Its function is as follows. Catalyzes the phospholipid dependent N-acylation of the N-terminal cysteine of apolipoprotein, the last step in lipoprotein maturation. The chain is Apolipoprotein N-acyltransferase from Prochlorococcus marinus subsp. pastoris (strain CCMP1986 / NIES-2087 / MED4).